Consider the following 182-residue polypeptide: ATP-dependent protease subunit HslV (182 aa).

The active site involves threonine 12. 3 residues coordinate Na(+): alanine 167, cysteine 170, and threonine 173.

It belongs to the peptidase T1B family. HslV subfamily. In terms of assembly, a double ring-shaped homohexamer of HslV is capped on each side by a ring-shaped HslU homohexamer. The assembly of the HslU/HslV complex is dependent on binding of ATP.

The protein resides in the cytoplasm. It catalyses the reaction ATP-dependent cleavage of peptide bonds with broad specificity.. Allosterically activated by HslU binding. In terms of biological role, protease subunit of a proteasome-like degradation complex believed to be a general protein degrading machinery. The polypeptide is ATP-dependent protease subunit HslV (Chlorobium luteolum (strain DSM 273 / BCRC 81028 / 2530) (Pelodictyon luteolum)).